Reading from the N-terminus, the 493-residue chain is L-arabinose isomerase 1 (493 aa).

Residues Glu-301, Glu-326, His-343, and His-442 each coordinate Mn(2+).

The protein belongs to the arabinose isomerase family. Requires Mn(2+) as cofactor.

It catalyses the reaction beta-L-arabinopyranose = L-ribulose. Its pathway is carbohydrate degradation; L-arabinose degradation via L-ribulose; D-xylulose 5-phosphate from L-arabinose (bacterial route): step 1/3. Catalyzes the conversion of L-arabinose to L-ribulose. In Bacillus licheniformis (strain ATCC 14580 / DSM 13 / JCM 2505 / CCUG 7422 / NBRC 12200 / NCIMB 9375 / NCTC 10341 / NRRL NRS-1264 / Gibson 46), this protein is L-arabinose isomerase 1.